The following is a 1357-amino-acid chain: DNA-directed RNA polymerase subunit beta (1357 aa).

This sequence belongs to the RNA polymerase beta chain family. The RNAP catalytic core consists of 2 alpha, 1 beta, 1 beta' and 1 omega subunit. When a sigma factor is associated with the core the holoenzyme is formed, which can initiate transcription.

It catalyses the reaction RNA(n) + a ribonucleoside 5'-triphosphate = RNA(n+1) + diphosphate. In terms of biological role, DNA-dependent RNA polymerase catalyzes the transcription of DNA into RNA using the four ribonucleoside triphosphates as substrates. This chain is DNA-directed RNA polymerase subunit beta, found in Pseudomonas fluorescens (strain ATCC BAA-477 / NRRL B-23932 / Pf-5).